The sequence spans 223 residues: UPF0758 protein Cvib_1178 (223 aa).

Residues 100–222 (KIQGARDVYE…WYSFRENNQL (123 aa)) enclose the MPN domain. The Zn(2+) site is built by His171, His173, and Asp184. Positions 171–184 (HNHPSGDTEPSNAD) match the JAMM motif motif.

It belongs to the UPF0758 family.

This Chlorobium phaeovibrioides (strain DSM 265 / 1930) (Prosthecochloris vibrioformis (strain DSM 265)) protein is UPF0758 protein Cvib_1178.